Here is a 569-residue protein sequence, read N- to C-terminus: Urease subunit alpha (569 aa).

In terms of domain architecture, Urease spans 131-569 (GGIDTHIHFI…LPLAQRYLLL (439 aa)). 3 residues coordinate Ni(2+): His136, His138, and Lys219. Residue Lys219 is modified to N6-carboxylysine. His221 provides a ligand contact to substrate. Positions 248 and 274 each coordinate Ni(2+). The Proton donor role is filled by His322. Asp362 is a binding site for Ni(2+).

This sequence belongs to the metallo-dependent hydrolases superfamily. Urease alpha subunit family. As to quaternary structure, heterotrimer of UreA (gamma), UreB (beta) and UreC (alpha) subunits. Three heterotrimers associate to form the active enzyme. Requires Ni cation as cofactor. Post-translationally, carboxylation allows a single lysine to coordinate two nickel ions.

The protein localises to the cytoplasm. It catalyses the reaction urea + 2 H2O + H(+) = hydrogencarbonate + 2 NH4(+). Its pathway is nitrogen metabolism; urea degradation; CO(2) and NH(3) from urea (urease route): step 1/1. This Parasynechococcus marenigrum (strain WH8102) protein is Urease subunit alpha.